The sequence spans 260 residues: MAAISMKELLEAGAHFGHQTRRWDPRMDEYIFTSRNGIHIIDLQKTLRMADDAYNWVKGEAADGANFLFVGTKKQATEAIEEEAKRAGVAYVNHRWLGGTLTNWNTIKTRINKLKELRAAEEDGSFDKLPKKEASQLGKQKAKLEKFLGGIADMEDIPDVMFVVDPKTEEIAVKEARSLNIPVVAMIDTNGNPDLVDVKIPANDDAIRAVKLITSKMADAIIEGRQGQDAGEDSAEKTFADTADGEGDFEESSNNENQEA.

The segment at 224-260 (GRQGQDAGEDSAEKTFADTADGEGDFEESSNNENQEA) is disordered. Residues 243-260 (ADGEGDFEESSNNENQEA) show a composition bias toward acidic residues.

It belongs to the universal ribosomal protein uS2 family.

In Oenococcus oeni (strain ATCC BAA-331 / PSU-1), this protein is Small ribosomal subunit protein uS2.